The sequence spans 317 residues: ADP-L-glycero-D-manno-heptose-6-epimerase (317 aa).

Residues 10–11, 31–32, Lys38, Lys53, 75–79, and Asn92 contribute to the NADP(+) site; these read FI, DD, and QGACS. Tyr139 acts as the Proton acceptor in catalysis. Lys143 contributes to the NADP(+) binding site. Asn166 is a substrate binding site. Positions 167 and 175 each coordinate NADP(+). Lys175 serves as the catalytic Proton acceptor. Residues Gly177, His184, 198 to 201, Arg211, and Tyr275 each bind substrate; that span reads FEGV.

The protein belongs to the NAD(P)-dependent epimerase/dehydratase family. HldD subfamily. Homopentamer. NADP(+) is required as a cofactor.

The enzyme catalyses ADP-D-glycero-beta-D-manno-heptose = ADP-L-glycero-beta-D-manno-heptose. Its pathway is nucleotide-sugar biosynthesis; ADP-L-glycero-beta-D-manno-heptose biosynthesis; ADP-L-glycero-beta-D-manno-heptose from D-glycero-beta-D-manno-heptose 7-phosphate: step 4/4. Catalyzes the interconversion between ADP-D-glycero-beta-D-manno-heptose and ADP-L-glycero-beta-D-manno-heptose via an epimerization at carbon 6 of the heptose. The protein is ADP-L-glycero-D-manno-heptose-6-epimerase of Shewanella piezotolerans (strain WP3 / JCM 13877).